Reading from the N-terminus, the 169-residue chain is MTLQYQTIADCVGNTPLVRLQRMAGNTSNTLLLKLEGNNPAGSVKDRPALSMITRAELRGQIHPGDTLIEATSGNTGIALAMAAAIKGYRMILIMPDNSSAERKAAMTAYGAELISVSKDDGMEGARDLAERMQAEGRGKVLDQFANGDNPEAHYTSTGPEIWRQTGGT.

Lys-45 is modified (N6-(pyridoxal phosphate)lysine). Asn-75 is a binding site for pyridoxal 5'-phosphate. The tract at residues 146–169 (ANGDNPEAHYTSTGPEIWRQTGGT) is disordered.

Belongs to the cysteine synthase/cystathionine beta-synthase family. Pyridoxal 5'-phosphate serves as cofactor.

The enzyme catalyses O-acetyl-L-serine + hydrogen sulfide = L-cysteine + acetate. It participates in amino-acid biosynthesis; L-cysteine biosynthesis; L-cysteine from L-serine: step 2/2. The chain is Cysteine synthase B (cysM) from Pseudomonas syringae pv. syringae.